The sequence spans 153 residues: Aspartate carbamoyltransferase regulatory chain (153 aa).

Positions 109, 114, 138, and 141 each coordinate Zn(2+).

This sequence belongs to the PyrI family. As to quaternary structure, contains catalytic and regulatory chains. Zn(2+) is required as a cofactor.

Involved in allosteric regulation of aspartate carbamoyltransferase. The protein is Aspartate carbamoyltransferase regulatory chain of Shigella flexneri serotype 5b (strain 8401).